We begin with the raw amino-acid sequence, 201 residues long: Pyridoxal 5'-phosphate synthase subunit PdxT (201 aa).

49-51 is an L-glutamine binding site; the sequence is GES. Residue Cys81 is the Nucleophile of the active site. Residues Arg110 and 139–140 each bind L-glutamine; that span reads IR. Active-site charge relay system residues include His175 and Glu177.

The protein belongs to the glutaminase PdxT/SNO family. As to quaternary structure, in the presence of PdxS, forms a dodecamer of heterodimers. Only shows activity in the heterodimer.

It carries out the reaction aldehydo-D-ribose 5-phosphate + D-glyceraldehyde 3-phosphate + L-glutamine = pyridoxal 5'-phosphate + L-glutamate + phosphate + 3 H2O + H(+). The catalysed reaction is L-glutamine + H2O = L-glutamate + NH4(+). It participates in cofactor biosynthesis; pyridoxal 5'-phosphate biosynthesis. Catalyzes the hydrolysis of glutamine to glutamate and ammonia as part of the biosynthesis of pyridoxal 5'-phosphate. The resulting ammonia molecule is channeled to the active site of PdxS. The sequence is that of Pyridoxal 5'-phosphate synthase subunit PdxT from Streptomyces avermitilis (strain ATCC 31267 / DSM 46492 / JCM 5070 / NBRC 14893 / NCIMB 12804 / NRRL 8165 / MA-4680).